We begin with the raw amino-acid sequence, 471 residues long: MLSILGWFWAFVSAFVLRYLRTIVNCISNWTYRPIPIPDNPTYGPQDVTIILPTIAQGGEELEGTLRTCLRTEPYEIILVTIDANVKNLTLLAKKINSKKIRVLSVREANKRRQMCRAIPEVSTRITIFVDDDVIWPVKLLPWILAPFENPQMGGVGTSQRRVRPEKMNAWVFLNMGYLERRNWDCSACLHIDGGLPCLSGRTAAYRTSILQDDAFTHGFTNETWRTMQLNADDDNFITRWLYSHNWKIGMQYHKEAEVLTTLEAGPKYLSQCLRWVRSNWRSNIKSMFVERHYWYTQLWTTYSCLQTTITAWALPWDAFLFYSLHKASTDWSDDSRKMAFTLLFLWIFGFTKNVKLWGHYFRYPVDVIYIPVHIAFGYFHGLIKFWGLVTLSETTWGSRDGADSSELNRIRMMPLPPYGSTTPDGRKSETFEYMQEMPLIDQLPAYDTHDRHPPLSNMTSTITTTTPFHD.

The helical transmembrane segment at 4 to 24 threads the bilayer; that stretch reads ILGWFWAFVSAFVLRYLRTIV. N-linked (GlcNAc...) asparagine glycosylation is found at asparagine 29, asparagine 88, and asparagine 222. 3 helical membrane passes run 305-325, 339-359, and 368-388; these read CLQT…FYSL, MAFT…KLWG, and VIYI…KFWG. N-linked (GlcNAc...) asparagine glycosylation is present at asparagine 458.

It belongs to the GT2 glycosyltransferase family.

It is found in the cell membrane. In terms of biological role, glycosyltransferase involved in the maintenance of the outermost surface of the fungal cell wall. Likely functions in the synthesis of a currently unknown, potentially minor but widespread, extracellular or outer cell wall polysaccharide which plays a key role in facilitating many interactions between plants and fungi by enabling hyphal growth on solid matrices. The chain is Type 2 glycosyltransferase from Zymoseptoria tritici (strain CBS 115943 / IPO323) (Speckled leaf blotch fungus).